A 60-amino-acid chain; its full sequence is Phycobilisome degradation protein NblA homolog 2 (60 aa).

This sequence to Synechococcus PCC 7942 NblA and some, to chloroplast ycf18.

This Synechocystis sp. (strain ATCC 27184 / PCC 6803 / Kazusa) protein is Phycobilisome degradation protein NblA homolog 2.